We begin with the raw amino-acid sequence, 513 residues long: Activin receptor type-2A (513 aa).

The first 19 residues, 1–19 (MGAAAKLAFAVFLISCSSG), serve as a signal peptide directing secretion. The Extracellular segment spans residues 20–135 (AILGRSETQE…TSNPVTPKPP (116 aa)). Cystine bridges form between Cys30–Cys60, Cys50–Cys78, Cys85–Cys104, Cys91–Cys103, and Cys105–Cys110. 2 N-linked (GlcNAc...) asparagine glycosylation sites follow: Asn43 and Asn66. A helical transmembrane segment spans residues 136–161 (YYNILLYSLVPLMLIAGIVICAFWVY). Residues 162–513 (RHHMMAYPPV…VDFPPKESSL (352 aa)) are Cytoplasmic-facing. In terms of domain architecture, Protein kinase spans 192–485 (LQLLEVKARG…GERITQMQRL (294 aa)). Residues 198-206 (KARGRFGCV) and Lys219 contribute to the ATP site. Asp322 functions as the Proton acceptor in the catalytic mechanism.

Belongs to the protein kinase superfamily. TKL Ser/Thr protein kinase family. TGFB receptor subfamily. In terms of assembly, part of a complex consisting of MAGI2/ARIP1, ACVR2A, ACVR1B and SMAD3. Interacts with MAGI2/ARIP1. Interacts with type I receptor ACVR1. Interacts with BMP7. Interacts with TSC22D1/TSC-22. Interacts with activin A/INHBA. The cofactor is Mg(2+). Mn(2+) serves as cofactor.

It localises to the cell membrane. The catalysed reaction is L-threonyl-[receptor-protein] + ATP = O-phospho-L-threonyl-[receptor-protein] + ADP + H(+). The enzyme catalyses L-seryl-[receptor-protein] + ATP = O-phospho-L-seryl-[receptor-protein] + ADP + H(+). In terms of biological role, on ligand binding, forms a receptor complex consisting of two type II and two type I transmembrane serine/threonine kinases. Type II receptors phosphorylate and activate type I receptors which autophosphorylate, then bind and activate SMAD transcriptional regulators. Receptor for activin A, activin B and inhibin A. Mediates induction of adipogenesis by GDF6. In Rattus norvegicus (Rat), this protein is Activin receptor type-2A.